Consider the following 589-residue polypeptide: LRR receptor-like serine/threonine-protein kinase FEI 2 (589 aa).

Residues 1-28 form the signal peptide; the sequence is MGICLMKRCCSWFLLISFLSALTNENEA. At 29 to 236 the chain is on the extracellular side; it reads ISPDGEALLS…TGQGGNNPKR (208 aa). LRR repeat units lie at residues 72–96, 97–120, 122–144, 145–168, and 170–193; these read TKRV…LGKL, DQLR…LGNC, ALEG…IGNL, SGLK…LGQL, and RLTK…LLAR. N-linked (GlcNAc...) asparagine glycans are attached at residues Asn-119 and Asn-143. 3 N-linked (GlcNAc...) asparagine glycosylation sites follow: Asn-175, Asn-215, and Asn-219. A helical membrane pass occupies residues 237–257; it reads LLISASATVGGLLLVALMCFW. Over 258–589 the chain is Cytoplasmic; that stretch reads GCFLYKKLGR…PSDFYDSSSD (332 aa). The region spanning 304 to 576 is the Protein kinase domain; that stretch reads LNEEHIIGCG…VVQLLESEVM (273 aa). ATP-binding positions include 310–318 and Lys-332; that span reads IGCGGFGTV. Ser-384 bears the Phosphoserine mark. Asp-427 serves as the catalytic Proton acceptor. Phosphothreonine is present on residues Thr-460, Thr-461, and Thr-466. A Phosphotyrosine modification is found at Tyr-474.

It belongs to the protein kinase superfamily. Ser/Thr protein kinase family. As to quaternary structure, interacts with the ACC synthases ACS5 and ACS9 but not ACS2, via the kinase domain. In terms of processing, autophosphorylated. As to expression, expressed in the root meristem and elongation zone, and in hypocotyls of etiolated seedlings.

The protein localises to the cell membrane. It catalyses the reaction L-seryl-[protein] + ATP = O-phospho-L-seryl-[protein] + ADP + H(+). It carries out the reaction L-threonyl-[protein] + ATP = O-phospho-L-threonyl-[protein] + ADP + H(+). In terms of biological role, involved in the signaling pathway that regulates cell wall function, including cellulose biosynthesis, likely via an 1-aminocyclopropane-1-carboxylic acid (ACC)-mediated signal (a precursor of ethylene). This chain is LRR receptor-like serine/threonine-protein kinase FEI 2 (FEI2), found in Arabidopsis thaliana (Mouse-ear cress).